The primary structure comprises 652 residues: DNA ligase (652 aa).

NAD(+) is bound by residues 29–33 (DSDYD), 78–79 (SL), and glutamate 107. The active-site N6-AMP-lysine intermediate is lysine 109. NAD(+) contacts are provided by arginine 130, glutamate 164, lysine 278, and lysine 302. Residues cysteine 395, cysteine 398, cysteine 413, and cysteine 418 each contribute to the Zn(2+) site. The region spanning 577-652 (NSDAALFGLT…IEDEDWLRQL (76 aa)) is the BRCT domain.

It belongs to the NAD-dependent DNA ligase family. LigA subfamily. The cofactor is Mg(2+). Mn(2+) serves as cofactor.

It catalyses the reaction NAD(+) + (deoxyribonucleotide)n-3'-hydroxyl + 5'-phospho-(deoxyribonucleotide)m = (deoxyribonucleotide)n+m + AMP + beta-nicotinamide D-nucleotide.. In terms of biological role, DNA ligase that catalyzes the formation of phosphodiester linkages between 5'-phosphoryl and 3'-hydroxyl groups in double-stranded DNA using NAD as a coenzyme and as the energy source for the reaction. It is essential for DNA replication and repair of damaged DNA. In Streptococcus pyogenes serotype M3 (strain ATCC BAA-595 / MGAS315), this protein is DNA ligase.